The sequence spans 451 residues: Tubby-like F-box protein 12 (451 aa).

Residues Ser57–Gly112 enclose the F-box domain. Positions Leu387–Ser406 are enriched in low complexity. Residues Leu387–Asp407 are disordered.

The protein belongs to the TUB family. In terms of tissue distribution, ubiquitous.

This chain is Tubby-like F-box protein 12 (TULP12), found in Oryza sativa subsp. japonica (Rice).